A 634-amino-acid polypeptide reads, in one-letter code: Probable potassium transport system protein Kup (634 aa).

Transmembrane regions (helical) follow at residues 19–39 (AVGLMVGAVGVCYGDIGTSPL), 62–82 (VLSLIFWSLIWVVSIKYVIFV), 113–133 (FVVVAGLIGAALFYGDSMITP), 150–170 (GLEHWTVPLALIVLIGLFLIQ), 177–197 (IGILFGPVMVLWFGALAALGV), 225–245 (IGVAILGATVLALTGAEALYA), 259–279 (WFLLVLPALVLNYFGQGATIL), 291–311 (LLAPGWALLPMVALSTLATVI), 349–369 (IYIGGVNWALMVGVVLLVLGF), 379–399 (YGVAVTGTMLITTLLMGVVIW), 406–426 (LWLGVPFFCVMLAVDSLFFAA), and 431–451 (VVQGGAFPVIAGIVIFILMST).

This sequence belongs to the HAK/KUP transporter (TC 2.A.72) family.

Its subcellular location is the cell inner membrane. It carries out the reaction K(+)(in) + H(+)(in) = K(+)(out) + H(+)(out). Transport of potassium into the cell. Likely operates as a K(+):H(+) symporter. The sequence is that of Probable potassium transport system protein Kup from Pseudomonas paraeruginosa (strain DSM 24068 / PA7) (Pseudomonas aeruginosa (strain PA7)).